A 762-amino-acid polypeptide reads, in one-letter code: Probable disease resistance protein At1g61300 (762 aa).

Gly2 is lipidated: N-myristoyl glycine. S-palmitoyl cysteine attachment occurs at residues Cys3 and Cys4. One can recognise an NB-ARC domain in the interval 26 to 329; that stretch reads NINRNSFGVE…CEGFIGEDQV (304 aa). 68–75 contacts ATP; it reads GMGGVGKT. 5 LRR repeats span residues 401–422, 423–444, 447–470, 471–493, and 494–516; these read AVRRMSLMDNHIEEITCESKCS, ELTTLFLQSNQLKNLSGEFIRY, KLVVLDLSYNRDFNKLPEQISGLV, SLQFLDLSNTSIKQLPVGLKKLK, and KLTFLNLAYTVRLCSISGISRLL.

The protein belongs to the disease resistance NB-LRR family.

It localises to the cell membrane. In terms of biological role, probable disease resistance protein. The protein is Probable disease resistance protein At1g61300 of Arabidopsis thaliana (Mouse-ear cress).